A 251-amino-acid polypeptide reads, in one-letter code: Triosephosphate isomerase (251 aa).

9-11 is a binding site for substrate; that stretch reads NWK. The Electrophile role is filled by His95. Glu167 serves as the catalytic Proton acceptor. Substrate contacts are provided by residues Gly173, Ser213, and 234-235; that span reads GG.

The protein belongs to the triosephosphate isomerase family. As to quaternary structure, homodimer.

It is found in the cytoplasm. The enzyme catalyses D-glyceraldehyde 3-phosphate = dihydroxyacetone phosphate. The protein operates within carbohydrate biosynthesis; gluconeogenesis. It participates in carbohydrate degradation; glycolysis; D-glyceraldehyde 3-phosphate from glycerone phosphate: step 1/1. Involved in the gluconeogenesis. Catalyzes stereospecifically the conversion of dihydroxyacetone phosphate (DHAP) to D-glyceraldehyde-3-phosphate (G3P). This is Triosephosphate isomerase from Geotalea uraniireducens (strain Rf4) (Geobacter uraniireducens).